We begin with the raw amino-acid sequence, 149 residues long: Deoxyuridine 5'-triphosphate nucleotidohydrolase (149 aa).

Residues 68 to 70 (RSG), N81, 85 to 87 (LID), and M95 each bind substrate.

The protein belongs to the dUTPase family. Mg(2+) is required as a cofactor.

The enzyme catalyses dUTP + H2O = dUMP + diphosphate + H(+). The protein operates within pyrimidine metabolism; dUMP biosynthesis; dUMP from dCTP (dUTP route): step 2/2. Its function is as follows. This enzyme is involved in nucleotide metabolism: it produces dUMP, the immediate precursor of thymidine nucleotides and it decreases the intracellular concentration of dUTP so that uracil cannot be incorporated into DNA. The chain is Deoxyuridine 5'-triphosphate nucleotidohydrolase from Bordetella bronchiseptica (strain ATCC BAA-588 / NCTC 13252 / RB50) (Alcaligenes bronchisepticus).